An 85-amino-acid polypeptide reads, in one-letter code: Protein RALF-like 28 (85 aa).

An N-terminal signal peptide occupies residues 1–31 (MSILKETKRFMVVAMFIACVFISNNMNVAVA). Cystine bridges form between C48-C53 and C66-C72. The segment at 60–85 (NPYHRGCEKSKRCRGPDPPALPRKMI) is disordered. The segment covering 75 to 85 (PDPPALPRKMI) has biased composition (pro residues).

The protein belongs to the plant rapid alkalinization factor (RALF) family.

It is found in the secreted. In terms of biological role, cell signaling peptide that may regulate plant stress, growth, and development. Mediates a rapid alkalinization of extracellular space by mediating a transient increase in the cytoplasmic Ca(2+) concentration leading to a calcium-dependent signaling events through a cell surface receptor and a concomitant activation of some intracellular mitogen-activated protein kinases. This Arabidopsis thaliana (Mouse-ear cress) protein is Protein RALF-like 28 (RALFL28).